We begin with the raw amino-acid sequence, 78 residues long: Large ribosomal subunit protein bL28 (78 aa).

The segment at 1–33 (MARKDDVTGEGPVTGNSVSDSNQKTNRRFKRNL) is disordered. Polar residues predominate over residues 14 to 24 (TGNSVSDSNQK).

The protein belongs to the bacterial ribosomal protein bL28 family.

In Salinibacter ruber (strain DSM 13855 / M31), this protein is Large ribosomal subunit protein bL28.